We begin with the raw amino-acid sequence, 1746 residues long: MSDNSGSGTSPWGSLNTPVGPPKVTLAYFSNEFPPDDLNFIVRKLFDRTSKGPFCSIDGVLLCAIQFANLIGHYETTDHLFPFGSSIASVAGLGIGLVAAAAVSVTPSLADLPVAGAEAVRIAFRLGVLVDGVSQNLQPRDRSTTGTPDSWAYVIPDVSPEVVQKELDEIHSREKTPIPSKIFVSALSRTSVTISGPPARLRSLFRLSDFFRDRKFVALPVYGGLCHAGHIYEQRHVQEVVEKSVLDETHVRYSPSVRLFSTSTGKPFLSTSVTNLFEQVVGEILTQKIQWDKVVKGVLERIQELSATEVEVLVFRDSLPVHELVKALKSADSGLQTTTEDLLQWLHQSRERLQGPRGSLQSKIAIVGMSCRMPSGATDTEKFWELLEKGLDVHRKIPADRFDVETHHDPTGKRVNTSITPYGCFIDEPGLFDAGFFNMSPREAQQTDPMQRLALVTAYEALERAGYVANRTSATNLHRIGTFYGQASDDYREVNTAQEISTYFIPGGCRAFGPGRINYFFKFSGPSYSIDTACSSSLATIQAACTSLWNGDTDTVVAGGMNVLTNSDAFAGLGNGHFLSKTPNACKTWDCEADGYCRADGIGSIVMKRLEDAEADNDNILGVILGAGTNHSADAISITHPHAPSQAFLYRQILRDAALDPFDVSFVEMHGTGTQAGDSEEMQSVTEVFAPIANKRRTSKQPLHIGAVKSNVGHGEAVAGVTALIKVLLMFQKEAIPPHAGIKNSINPGFPKDLDKRNINIPYQKTAWPRSTDRKRIAVVNNFSAAGGNTTIAIEEGPLRQTIGHDPRTTHLIPISAKSKVSLKGNIQRLIDYLEVSPDVSLADLSYSLTARRYHHSHRVAITTSDVAHLKKQLRSQLDSADSHKPIVAAAGPPPVAFAFTGQGASYGTMDLELYHESKYFRDQILQLDSFAQGQGFPSFVPAIDGSFPKEHTHRPVVTQLALLCTEIALAKYWASLGVKPDVVIGHSLGEYAALHVAGVLSASDAIFLVGQRALMLEKKCQAGSHKMLAVRASLAQVQEAAGELPYEVACINGQKDTVLSAAKDDIDKLASVLESAGYKCFSLDVAFAFHSAQTDPILDDFESVSRTGVLFQAPNLPVISPLLGKVVFNDKTINANYVRRATRESVDFLSALEAAQKISIIDESTTWIEIGPHPVCMGFIRSAVPSIKVASPSIRRGENNWQTLVQTLGALHLAGIPVDWNEYHRPFEQALRLLDLPTYSWNDKTYWIQYNGDWALTKGNTFYDAEKAAKAPRVGGDLPPSPISTSTVHRVIGETFDGTAGTVDIQSDLMQQDFHDAAYGHKMNNCGVVTSSIHADIVYTIGRYLHTKLKPGVKDIHMNISNLEVVKGLVAQKNRDVPQLIQVSISTEDISSGTAQVTWFNVLPDGGLDEPFATATLFYGKANDWLQSWIPTTHLVLGRVHELERLAEQGVANRFSRNMAYGLFARNLVDYADKYRGMQSVVLHGLEAFADVELTKEKGGTWTVPPFFIDSVAHLAGFIMNVSDAVDTANNFCVTPGWESMRFARPLLAGARYRSYVKMIPTEEDAGVFLGDVYIFQDNKIIGQVRGIKFRRYPRLLLDRFFSAPDAAKHGGKHAPAVKAAIPPALEKKSAVVVAQVPVVDKPPPTKENAVAAPAAKSPEPVAAAAVNEDSITVKAMALVAAEAALDVSELEDDVQFANIGVDSLMSLVIAEKFRETLGVTISGSLFLEYPAVGDLRAWLLEYYG.

The tract at residues 4–227 (NSGSGTSPWG…ALPVYGGLCH (224 aa)) is N-terminal acylcarrier protein transacylase domain (SAT). Residues 361–796 (QSKIAIVGMS…GGNTTIAIEE (436 aa)) enclose the Ketosynthase family 3 (KS3) domain. Active-site for beta-ketoacyl synthase activity residues include Cys-534, His-670, and His-714. The segment at 898–1218 (FAFTGQGASY…LGALHLAGIP (321 aa)) is malonyl-CoA:ACP transacylase (MAT) domain. The product template (PT) domain stretch occupies residues 1286 to 1605 (TSTVHRVIGE…RLLLDRFFSA (320 aa)). The N-terminal hotdog fold stretch occupies residues 1290–1425 (HRVIGETFDG…ATLFYGKAND (136 aa)). The 311-residue stretch at 1290 to 1600 (HRVIGETFDG…FRRYPRLLLD (311 aa)) folds into the PKS/mFAS DH domain. The Proton acceptor; for dehydratase activity role is filled by His-1322. The tract at residues 1452 to 1600 (VANRFSRNMA…FRRYPRLLLD (149 aa)) is C-terminal hotdog fold. Residue Asp-1511 is the Proton donor; for dehydratase activity of the active site. The 75-residue stretch at 1671 to 1745 (DSITVKAMAL…DLRAWLLEYY (75 aa)) folds into the Carrier domain. Ser-1705 carries the post-translational modification O-(pantetheine 4'-phosphoryl)serine.

It catalyses the reaction holo-[ACP] + 8 malonyl-CoA + 8 H(+) = atrochrysone carboxyl-[ACP] + 8 CO2 + 8 CoA + 2 H2O. It participates in secondary metabolite biosynthesis. In terms of biological role, non-reducing polyketide synthase; part of the gene cluster that mediates the biosynthesis of pestheic acid, a diphenyl ether which is a biosynthetic precursor of the unique chloropupukeananes. The biosynthesis initiates from condensation of acetate and malonate units catalyzed by the non-reducing PKS ptaA. As the ptaA protein is TE/CLC domain-deficient, hydrolysis and Claisen cyclization of the polyketide could be catalyzed by ptaB containing a beta-lactamase domain. The ptaB protein might hydrolyze the thioester bond between the ACP of ptaA and the intermediate to release atrochrysone carboxylic acid, which is spontaneously dehydrated to form endocrocin anthrone. Endocrocin anthrone is then converted to endocrocin, catalyzed by the anthrone oxygenase ptaC. Spontaneous decarboxylation of endocrocin occurs to generate emodin. An O-methyltransferase (ptaH or ptaI) could methylate emodin to form physcion. PtaJ could then catalyze the oxidative cleavage of physcion, and rotation of the intermediate could then afford desmethylisosulochrin. PtaF, a putative NADH-dependent oxidoreductase, might also participate in the oxidative cleavage step. Desmethylisosulochrin is then transformed by another O-methyltransferase (ptaH or ptaI) to form isosulochrin. Chlorination of isosulochrin by ptaM in the cyclohexadienone B ring then produces chloroisosulochrin. PtaE is responsible for the oxidative coupling reactions of both benzophenones isosulochrin and chloroisosulochrin to RES-1214-1 and pestheic acid respectively, regardless of chlorination. This Pestalotiopsis fici (strain W106-1 / CGMCC3.15140) protein is Non-reducing polyketide synthase ptaA.